A 568-amino-acid polypeptide reads, in one-letter code: Phosphoprotein (568 aa).

A disordered region spans residues 1 to 24; sequence MDQDAFFFERDPEAEGEAPRKQES. Positions 7-23 are enriched in basic and acidic residues; it reads FFERDPEAEGEAPRKQE. The interval 33 to 41 is N0 binding; it reads DVVLSYKPT. A disordered region spans residues 45–324; it reads EDRSWLHGII…ANEEETSNTS (280 aa). Residues 58–105 are compositionally biased toward basic and acidic residues; that stretch reads EENKPSCKADDNNKDRAISTPTQDHRSGEESGISRRTSESKTETHARL. Polar residues predominate over residues 107–121; that stretch reads DQQSIHRASRRGTSP. Composition is skewed to basic and acidic residues over residues 132–144 and 151–167; these read RNTR…PNER and LTDE…KREE. A compositionally biased stretch (polar residues) spans 190–208; that stretch reads RTNNNGRSMETSSTHSTRI. Basic and acidic residues predominate over residues 239 to 253; the sequence is TRSERTQNSELHKST. A compositionally biased stretch (polar residues) spans 294-305; it reads YTMNNANNNTKS. The segment at 344–411 is multimerization; sequence FELSRSASHV…SSRDLHKRFS (68 aa). Positions 387–416 form a coiled coil; that stretch reads EENRTLLKQIQEEINSSRDLHKRFSEYQKE. The l protein binding stretch occupies residues 412-445; that stretch reads EYQKEQNSLMMANLSTLHIITDRGGKTGDPSDTT. Residues 434–455 are disordered; it reads RGGKTGDPSDTTRSPSVFTKGK. A compositionally biased stretch (polar residues) spans 441 to 450; that stretch reads PSDTTRSPSV. Residues 479–568 are interaction with the nucleocapsid (N-RNA); that stretch reads DLIREDELRD…FEEDIDSLTN (90 aa).

Belongs to the respirovirus P protein family. As to quaternary structure, homotetramer. Interacts (via multimerization domain) with polymerase L; this interaction forms the polymerase complex. Interacts (via N-terminus) with N0; this interaction allows P to chaperon N0 before encapsidation and form the N-P complex. Interacts (via C-terminus) with N-RNA template; this interaction positions the polymerase on the template.

Functionally, essential cofactor of the RNA polymerase L that plays a central role in the transcription and replication by forming the polymerase complex with RNA polymerase L and recruiting L to the genomic N-RNA template for RNA synthesis. Also plays a central role in the encapsidation of nascent RNA chains by forming the encapsidation complex with the nucleocapsid protein N (N-P complex). Acts as a chaperone for newly synthesized free N protein, so-called N0, allowing encapsidation of nascent RNA chains during replication. The nucleoprotein protein N prevents excessive phosphorylation of P, which leads to down-regulation of viral transcription/ replication. Participates, together with N, in the formation of viral factories (viroplasms), which are large inclusions in the host cytoplasm where replication takes place. Recruits host PI4KB and remodel the host endoplasmic reticulum membrane to form viral replication factories. This Human parainfluenza 1 virus (strain C39) (HPIV-1) protein is Phosphoprotein (P/C).